The primary structure comprises 116 residues: NADH-ubiquinone oxidoreductase chain 3 (116 aa).

The next 3 membrane-spanning stretches (helical) occupy residues 3 to 23 (LITTIIAITITLSAVLATVSF), 56 to 76 (FFLIAILFLLFDLEIALLLPL), and 85 to 105 (PALTLAWSAAVLALLTLGLIY).

The protein belongs to the complex I subunit 3 family.

It is found in the mitochondrion membrane. It catalyses the reaction a ubiquinone + NADH + 5 H(+)(in) = a ubiquinol + NAD(+) + 4 H(+)(out). Functionally, core subunit of the mitochondrial membrane respiratory chain NADH dehydrogenase (Complex I) that is believed to belong to the minimal assembly required for catalysis. Complex I functions in the transfer of electrons from NADH to the respiratory chain. The immediate electron acceptor for the enzyme is believed to be ubiquinone. The chain is NADH-ubiquinone oxidoreductase chain 3 (MT-ND3) from Salmo trutta (Brown trout).